Consider the following 968-residue polypeptide: Angiomotin-like protein 1 (968 aa).

Polar residues-rich tracts occupy residues 152–164 (VYQSARQEPQGQE) and 177–187 (RSTQPQQNNEE). The disordered stretch occupies residues 152 to 258 (VYQSARQEPQ…NRANSGQAHK (107 aa)). Residues 203–224 (GQQQQQQQQQQQQQQQQQQGQG) are compositionally biased toward low complexity. 3 positions are modified to phosphoserine: Ser-253, Ser-281, and Ser-307. Positions 271 to 291 (RSLSERIMQLSLERNGAKQHL) form a coiled coil. The disordered stretch occupies residues 285–343 (NGAKQHLPSSGNGKSFKAGGEPSPAQPVCKALDPRGPPPEYPFKTKPMKSPVSKNQDHG). Coiled coils occupy residues 449-645 (VERA…RRLR) and 676-705 (ALMELVREKEERILALEADMTKWEQKYLEE). The interval 721 to 742 (AERDTTISNHSRNGSYGESSLE) is disordered. Positions 726–738 (TISNHSRNGSYGE) are enriched in polar residues. Ser-731 is modified (phosphoserine). The stretch at 748-773 (EEEEVVQANRRCQDMEYTIKNLHAKI) forms a coiled coil. The interval 785-834 (QRSRKDAGKTDSASLRPARSVPSIAAATGTHSRQTSLTSSQLTEEKKEEK) is disordered. Ser-804, Ser-816, and Ser-840 each carry phosphoserine. Over residues 853–878 (ASAPLLPTTPASALSLPASTTSASST) the composition is skewed to low complexity. Residues 853-956 (ASAPLLPTTP…GRVSNLLHKP (104 aa)) form a disordered region. A phosphoserine mark is found at Ser-912 and Ser-918. The short motif at 965-968 (EVLI) is the PDZ-binding element.

This sequence belongs to the angiomotin family. In terms of processing, polyubiquitinated by NEDD4, leading to proteasomal degradation. Expressed in exocrine glands, including pancreas, submandibular gland, lacrimal gland, parotid gland and sublingual gland (at protein level).

It localises to the cell junction. The protein localises to the tight junction. Functionally, inhibits the Wnt/beta-catenin signaling pathway, probably by recruiting CTNNB1 to recycling endosomes and hence preventing its translocation to the nucleus. In Mus musculus (Mouse), this protein is Angiomotin-like protein 1 (Amotl1).